Here is a 573-residue protein sequence, read N- to C-terminus: Sulfite reductase [NADPH] hemoprotein beta-component (573 aa).

The [4Fe-4S] cluster site is built by Cys438, Cys444, Cys483, and Cys487. Cys487 contributes to the siroheme binding site.

This sequence belongs to the nitrite and sulfite reductase 4Fe-4S domain family. In terms of assembly, alpha(8)-beta(8). The alpha component is a flavoprotein, the beta component is a hemoprotein. The cofactor is siroheme. [4Fe-4S] cluster serves as cofactor.

The catalysed reaction is hydrogen sulfide + 3 NADP(+) + 3 H2O = sulfite + 3 NADPH + 4 H(+). Its pathway is sulfur metabolism; hydrogen sulfide biosynthesis; hydrogen sulfide from sulfite (NADPH route): step 1/1. Component of the sulfite reductase complex that catalyzes the 6-electron reduction of sulfite to sulfide. This is one of several activities required for the biosynthesis of L-cysteine from sulfate. In Shouchella clausii (strain KSM-K16) (Alkalihalobacillus clausii), this protein is Sulfite reductase [NADPH] hemoprotein beta-component.